The chain runs to 463 residues: Myocyte-specific enhancer factor 2C (463 aa).

Positions 3-57 (RKKIQITRIMDERNRQVTFTKRKFGLMKKAYELSVLCDCEIALIIFNSTNKLFQY) constitute an MADS-box domain. Lysine 4 bears the N6-acetyllysine mark. Residues 58 to 86 (ASTDMDKVLLKYTEYNEPHESRTNSDIVE) constitute a DNA-binding region (mef2-type). A Phosphoserine; by CK2 modification is found at serine 59. Phosphoserine occurs at positions 98 and 104. N6-acetyllysine is present on residues lysine 114 and lysine 117. The segment at 178–223 (NSMSPGVTHRPPSAGNTGGLMGGDLTSGAGTSAGNGYGNPRNSPGL) is disordered. A phosphoserine mark is found at serine 220 and serine 226. An N6-acetyllysine mark is found at lysine 232 and lysine 237. Serine 238 bears the Phosphoserine mark. Residues lysine 250 and lysine 262 each carry the N6-acetyllysine modification. A phosphothreonine; by MAPK7 and MAPK14 mark is found at threonine 283 and threonine 290. Residues 358–389 (ACTSTHLSQSSNLSLPSTQSLNIKSEPVSPPR) are transcription repressor. Over residues 365–380 (SQSSNLSLPSTQSLNI) the composition is skewed to polar residues. The disordered stretch occupies residues 365 to 463 (SQSSNLSLPS…RMRLSEGWAT (99 aa)). Lysine 381 is covalently cross-linked (Glycyl lysine isopeptide (Lys-Gly) (interchain with G-Cter in SUMO)). Serine 386 is modified (phosphoserine; by CDK5). Position 409 is a phosphoserine; by MAPK7 (serine 409). The segment covering 409–422 (SPVDSLSSCSSSYD) has biased composition (low complexity). Basic and acidic residues predominate over residues 423-433 (GSDREDHRNEF). A Phosphoserine modification is found at serine 435.

In terms of assembly, forms a complex with class II HDACs in undifferentiating cells. On myogenic differentiation, HDACs are released into the cytoplasm allowing MEF2s to interact with other proteins for activation. Interacts with EP300 in differentiating cells; the interaction acetylates MEF2C leading to increased DNA binding and activation. Interacts with HDAC7 and CARM1. Interacts with HDAC4, HDAC7 and HDAC9; the interaction with HDACs represses transcriptional activity. Interacts with LPIN1. Interacts with MYOCD. Interacts with AKAP13. Interacts with FOXK1; the interaction inhibits MEF2C transactivation activity. Interacts (via N-terminus) with HABP4; this interaction decreases DNA-binding activity of MEF2C in myocardial cells in response to mechanical stress. Interacts with JPH2; interaction specifically takes place with the Junctophilin-2 N-terminal fragment cleavage product of JPH2. Interacts (via MADS box) with SOX18. Interacts with PHF7; the interaction promotes MEF2C binding to its transcription targets. In terms of processing, phosphorylated on Ser-59; which enhances DNA binding activity. Phosphorylated on Ser-386; which is required for Lys-381 sumoylation and inhibits transcriptional activity. Post-translationally, acetylated by p300 on several sites in diffentiating myocytes. Acetylation on Lys-4 increases DNA binding and transactivation. Sumoylated on Lys-381 with SUMO2 but not SUMO1; which represses transcriptional activity. In terms of processing, proteolytically cleaved in cerebellar granule neurons on several sites by caspase 3 and caspase 7 following neurotoxicity. Preferentially cleaves the CDK5-mediated hyperphosphorylated form which leads to neuron apoptosis and transcriptional inactivation.

The protein localises to the nucleus. The protein resides in the cytoplasm. It localises to the sarcoplasm. Its function is as follows. Transcription activator which binds specifically to the MEF2 element present in the regulatory regions of many muscle-specific genes. Controls cardiac morphogenesis and myogenesis, and is also involved in vascular development. Enhances transcriptional activation mediated by SOX18. Plays an essential role in hippocampal-dependent learning and memory by suppressing the number of excitatory synapses and thus regulating basal and evoked synaptic transmission. Crucial for normal neuronal development, distribution, and electrical activity in the neocortex. Necessary for proper development of megakaryocytes and platelets and for bone marrow B-lymphopoiesis. Required for B-cell survival and proliferation in response to BCR stimulation, efficient IgG1 antibody responses to T-cell-dependent antigens and for normal induction of germinal center B-cells. May also be involved in neurogenesis and in the development of cortical architecture. This is Myocyte-specific enhancer factor 2C from Sus scrofa (Pig).